The sequence spans 629 residues: MSTAVRICVCGDEGTGKSSLIASLVKGVFVANKIQAVLPQVTIPPTTGTPENVTTTIVDTSARPQDRTTLRKEIRKSNVILLVYSDHYSYERVALFWMPYFRSLGVNVPVVLCANKSDLVSDGNAAQVAEEEMLPVMAEFREIDSCIRTSAKEQKNVIEVFYLCQKAVTHPIAPLFDYKEGQLKPACVDALRRIFFLSDKDQDGYLNDQEMQDFQQKSFDKPLSQEDLDNIKLTVSKSVPSSSTDKGLDLRGFLQLNKLYAEKGRHETIWIILRKYHYTDSLSLEDSFLHPRFDVPDYASAELSPAGYRFFMDLFLTFDKDNDGGLNDRELAALFAPTPGLPHSWAETSFPSTTVRNEAGHITLQGWLAQWSMTTFLEPKTTLEYLAYLGFETPNARETTTAALKITKPRKRRRRPGRVDRNVVLCYILGSSGAGKSSLLDVFLNRPFDTLYHPTIKPRQAVNSVELQGGKQCYLILEELGELEPAILENQAKLDACDLICYAYDSSEPDSFSHIVELRKRYPQLDELPAVYTALKADRDKTTQRSELQPDAYTAALNMSAPLHVSVTWNSISELFVALAEAATNPSTAFPRSEEPPADRASLYMALGATACAALAAFMIWRRSTSNAA.

The Cytoplasmic portion of the chain corresponds to 1 to 600 (MSTAVRICVC…PRSEEPPADR (600 aa)). Residues 2–170 (STAVRICVCG…FYLCQKAVTH (169 aa)) form the Miro 1 domain. Residues 11–18 (GDEGTGKS), 59–63 (DTSAR), and 115–118 (NKSD) contribute to the GTP site. EF-hand domains are found at residues 186–221 (ACVD…SFDK) and 306–341 (AGYR…TPGL). Ca(2+)-binding residues include Asp199, Asp201, Asp203, Tyr205, Glu210, Asp319, Asp321, Asp323, and Glu330. A Miro 2 domain is found at 421-585 (RNVVLCYILG…FVALAEAATN (165 aa)). GTP is bound by residues 430–437 (GSSGAGKS), 466–470 (ELQGG), and 535–538 (LKAD). A helical; Anchor for type IV membrane protein membrane pass occupies residues 601–621 (ASLYMALGATACAALAAFMIW). Residues 622-629 (RRSTSNAA) lie on the Mitochondrial intermembrane side of the membrane.

This sequence belongs to the mitochondrial Rho GTPase family.

It localises to the mitochondrion outer membrane. In terms of biological role, mitochondrial GTPase involved in mitochondrial trafficking. Probably involved in control of anterograde transport of mitochondria and their subcellular distribution. This is Mitochondrial Rho GTPase 1 (gem-1) from Neurospora crassa (strain ATCC 24698 / 74-OR23-1A / CBS 708.71 / DSM 1257 / FGSC 987).